Reading from the N-terminus, the 323-residue chain is Polycomb complex protein BMI-1-B (323 aa).

The RING-type zinc finger occupies 18 to 57 (CVLCGGYFIDAATIIECLHSFCKTCIVRYLETSKYCPICD). The short motif at 81–95 (KLVPGLFKGEMKRRR) is the Nuclear localization signal element. The disordered stretch occupies residues 238–310 (PHTDRINNTS…HQNPFANRAR (73 aa)). Residues 287–301 (HISSTINGTNSSSSH) show a composition bias toward low complexity.

Component of a PRC1-like complex. Interacts with cbx4.

Its subcellular location is the nucleus. In terms of biological role, component of a Polycomb group (PcG) multiprotein PRC1-like complex, a complex class required to maintain the transcriptionally repressive state of many genes, including Hox genes, throughout development. PcG PRC1 complex acts via chromatin remodeling and modification of histones; it mediates monoubiquitination of histone H2A 'Lys-119', rendering chromatin heritably changed in its expressibility. In the PRC1 complex, it is required to stimulate the E3 ubiquitin-protein ligase activity of rnf2. The protein is Polycomb complex protein BMI-1-B (bmi1b) of Xenopus laevis (African clawed frog).